The sequence spans 210 residues: Ion-translocating oxidoreductase complex subunit G (210 aa).

The helical transmembrane segment at 9-29 (SLVLALFAIAATALVTITYAL) threads the bilayer. Thr-176 is modified (FMN phosphoryl threonine).

The protein belongs to the RnfG family. The complex is composed of six subunits: RnfA, RnfB, RnfC, RnfD, RnfE and RnfG. Requires FMN as cofactor.

The protein localises to the cell inner membrane. Part of a membrane-bound complex that couples electron transfer with translocation of ions across the membrane. The sequence is that of Ion-translocating oxidoreductase complex subunit G from Aliivibrio fischeri (strain MJ11) (Vibrio fischeri).